Consider the following 407-residue polypeptide: S-adenosylmethionine synthase (407 aa).

Histidine 15 is a binding site for ATP. Aspartate 17 lines the Mg(2+) pocket. Glutamate 43 is a K(+) binding site. The L-methionine site is built by glutamate 56 and glutamine 100. A flexible loop region spans residues glutamine 100–glutamate 110. ATP contacts are provided by residues aspartate 171–lysine 173, lysine 248–phenylalanine 249, aspartate 257, arginine 263–lysine 264, alanine 280, and lysine 284. L-methionine is bound at residue aspartate 257. Position 288 (lysine 288) interacts with L-methionine.

The protein belongs to the AdoMet synthase family. In terms of assembly, homotetramer; dimer of dimers. The cofactor is Mg(2+). K(+) serves as cofactor.

The protein localises to the cytoplasm. It catalyses the reaction L-methionine + ATP + H2O = S-adenosyl-L-methionine + phosphate + diphosphate. The protein operates within amino-acid biosynthesis; S-adenosyl-L-methionine biosynthesis; S-adenosyl-L-methionine from L-methionine: step 1/1. In terms of biological role, catalyzes the formation of S-adenosylmethionine (AdoMet) from methionine and ATP. The overall synthetic reaction is composed of two sequential steps, AdoMet formation and the subsequent tripolyphosphate hydrolysis which occurs prior to release of AdoMet from the enzyme. In Synechococcus sp. (strain RCC307), this protein is S-adenosylmethionine synthase.